Here is a 756-residue protein sequence, read N- to C-terminus: Hormone-sensitive lipase (756 aa).

The Involved in the stabilization of the negatively charged intermediate by the formation of the oxyanion hole signature appears at 350–352 (HGG). S424 is a catalytic residue. Disordered stretches follow at residues 542–570 (SVSKTEPMRRSVSEAALTQPEGSLGTDSL) and 581–600 (RNSSDTTDTPELSLSAETLG). At S552 the chain carries Phosphoserine; by PKA. S554 bears the Phosphoserine; by AMPK mark. Residues 581–596 (RNSSDTTDTPELSLSA) are compositionally biased toward polar residues. 2 positions are modified to phosphoserine: S595 and S649. Active-site residues include D692 and H722.

The protein belongs to the 'GDXG' lipolytic enzyme family. As to quaternary structure, monomer and homodimer. Interacts with CAVIN1 in the adipocyte cytoplasm. Interacts with PLIN5. Post-translationally, phosphorylation by AMPK reduces its translocation towards the lipid droplets.

It localises to the cell membrane. The protein localises to the membrane. It is found in the caveola. Its subcellular location is the cytoplasm. The protein resides in the cytosol. It localises to the lipid droplet. It carries out the reaction a diacylglycerol + H2O = a monoacylglycerol + a fatty acid + H(+). The catalysed reaction is a triacylglycerol + H2O = a diacylglycerol + a fatty acid + H(+). The enzyme catalyses a monoacylglycerol + H2O = glycerol + a fatty acid + H(+). It catalyses the reaction Hydrolyzes glycerol monoesters of long-chain fatty acids.. It carries out the reaction 1,2-di-(9Z-octadecenoyl)-glycerol + (9Z)-octadecenoate + H(+) = 1,2,3-tri-(9Z-octadecenoyl)-glycerol + H2O. The catalysed reaction is 2,3-di-(9Z)-octadecenoyl-sn-glycerol + H2O = 2-(9Z-octadecenoyl)-glycerol + (9Z)-octadecenoate + H(+). The enzyme catalyses cholesteryl (9Z-octadecenoate) + H2O = cholesterol + (9Z)-octadecenoate + H(+). It catalyses the reaction 1,2,3-tri-(9Z-octadecenoyl)-glycerol + H2O = di-(9Z)-octadecenoylglycerol + (9Z)-octadecenoate + H(+). It carries out the reaction all-trans-retinyl hexadecanoate + H2O = all-trans-retinol + hexadecanoate + H(+). The catalysed reaction is 1,2-di-(9Z-octadecenoyl)-glycerol + H2O = (9Z-octadecenoyl)-glycerol + (9Z)-octadecenoate + H(+). The enzyme catalyses 2-(5Z,8Z,11Z,14Z-eicosatetraenoyl)-glycerol + H2O = glycerol + (5Z,8Z,11Z,14Z)-eicosatetraenoate + H(+). It catalyses the reaction 1-(9Z-octadecenoyl)-glycerol + H2O = glycerol + (9Z)-octadecenoate + H(+). It carries out the reaction 2-(9Z-octadecenoyl)-glycerol + H2O = glycerol + (9Z)-octadecenoate + H(+). The catalysed reaction is 1-O-hexadecyl-2-acetyl-sn-glycerol + H2O = 1-O-hexadecyl-sn-glycerol + acetate + H(+). The enzyme catalyses 1,2-di-(9Z-octadecenoyl)-sn-glycerol + H2O = (9Z-octadecenoyl)-glycerol + (9Z)-octadecenoate + H(+). It catalyses the reaction 1,3-di-(9Z-octadecenoyl)-glycerol + H2O = 1-(9Z-octadecenoyl)-glycerol + (9Z)-octadecenoate + H(+). It carries out the reaction 1,2-di-(9Z-octadecenoyl)-glycerol + H2O = 2-(9Z-octadecenoyl)-glycerol + (9Z)-octadecenoate + H(+). Its pathway is glycerolipid metabolism; triacylglycerol degradation. Functionally, lipase with broad substrate specificity, catalyzing the hydrolysis of triacylglycerols (TAGs), diacylglycerols (DAGs), monoacylglycerols (MAGs), cholesteryl esters and retinyl esters. Shows a preferential hydrolysis of DAGs over TAGs and MAGs. Preferentially hydrolyzes fatty acid (FA) esters at the sn-3 position of the glycerol backbone in DAGs and FA esters at the sn-1 and sn-2 positions of the glycerol backbone in TAGs. Catalyzes the hydrolysis of 2-arachidonoylglycerol, an endocannabinoid and of 2-acetyl monoalkylglycerol ether, the penultimate precursor of the pathway for de novo synthesis of platelet-activating factor. In adipose tissue and heart, it primarily hydrolyzes stored triglycerides to free fatty acids, while in steroidogenic tissues, it principally converts cholesteryl esters to free cholesterol for steroid hormone production. The protein is Hormone-sensitive lipase (LIPE) of Bos taurus (Bovine).